Reading from the N-terminus, the 246-residue chain is 3-oxoacyl-[acyl-carrier-protein] reductase FabG (246 aa).

Residues 11-14 (GASR), 62-63 (NV), and Asn89 contribute to the NADP(+) site. Residue Ser141 coordinates substrate. Tyr154 serves as the catalytic Proton acceptor. NADP(+) is bound by residues 154 to 158 (YVATK) and Ile187.

The protein belongs to the short-chain dehydrogenases/reductases (SDR) family. As to quaternary structure, homotetramer.

The enzyme catalyses a (3R)-hydroxyacyl-[ACP] + NADP(+) = a 3-oxoacyl-[ACP] + NADPH + H(+). Its pathway is lipid metabolism; fatty acid biosynthesis. In terms of biological role, catalyzes the NADPH-dependent reduction of beta-ketoacyl-ACP substrates to beta-hydroxyacyl-ACP products, the first reductive step in the elongation cycle of fatty acid biosynthesis. In Staphylococcus aureus (strain Mu50 / ATCC 700699), this protein is 3-oxoacyl-[acyl-carrier-protein] reductase FabG (fabG).